A 1754-amino-acid polypeptide reads, in one-letter code: Intraflagellar transport protein 172 homolog (1754 aa).

7 WD repeats span residues 14-53, 64-103, 110-149, 151-190, 194-232, 283-322, and 519-557; these read EQIQ…RDKF, KNSY…NDKK, PQAS…QSLY, GDSI…EPLG, QHPV…RTFD, ACLY…TVWQ, and TLLS…EHVT. TPR repeat units follow at residues 623-656, 690-723, 748-781, 807-840, 852-885, 1041-1074, 1140-1166, 1167-1199, 1211-1250, 1282-1315, and 1698-1733; these read KAMW…SKAY, GSDL…DEAV, SEQQ…ARAA, SELY…ARAL, TALE…QKAL, RGKL…EDGY, DEVH…FLKA, NKPR…AVGE, TSNY…AEEH, SRSY…NAED, and FPVR…SPGS.

Belongs to the IFT172 family.

The protein localises to the cell projection. Its subcellular location is the cilium. Its function is as follows. Required for the maintenance and formation of cilia. The chain is Intraflagellar transport protein 172 homolog from Drosophila melanogaster (Fruit fly).